Reading from the N-terminus, the 354-residue chain is Protein PHLOEM PROTEIN 2-LIKE A8 (354 aa).

The TIR domain maps to 12–179 (TGPQVFINFR…EMILEIQKAL (168 aa)). Residue Glu86 is part of the active site.

The catalysed reaction is NAD(+) + H2O = ADP-D-ribose + nicotinamide + H(+). The protein is Protein PHLOEM PROTEIN 2-LIKE A8 (PP2A8) of Arabidopsis thaliana (Mouse-ear cress).